Here is a 272-residue protein sequence, read N- to C-terminus: Formamidopyrimidine-DNA glycosylase (272 aa).

Pro-2 serves as the catalytic Schiff-base intermediate with DNA. Glu-3 (proton donor) is an active-site residue. The Proton donor; for beta-elimination activity role is filled by Lys-58. DNA is bound by residues His-94, Arg-112, and Arg-153. The FPG-type zinc-finger motif lies at 238–272; it reads FVYDRAGEPCRVCGAPIRQIVQGQRSTYFCPNCQR. The active-site Proton donor; for delta-elimination activity is Arg-262.

Belongs to the FPG family. In terms of assembly, monomer. The cofactor is Zn(2+).

It carries out the reaction Hydrolysis of DNA containing ring-opened 7-methylguanine residues, releasing 2,6-diamino-4-hydroxy-5-(N-methyl)formamidopyrimidine.. It catalyses the reaction 2'-deoxyribonucleotide-(2'-deoxyribose 5'-phosphate)-2'-deoxyribonucleotide-DNA = a 3'-end 2'-deoxyribonucleotide-(2,3-dehydro-2,3-deoxyribose 5'-phosphate)-DNA + a 5'-end 5'-phospho-2'-deoxyribonucleoside-DNA + H(+). Functionally, involved in base excision repair of DNA damaged by oxidation or by mutagenic agents. Acts as a DNA glycosylase that recognizes and removes damaged bases. Has a preference for oxidized purines, such as 7,8-dihydro-8-oxoguanine (8-oxoG). Has AP (apurinic/apyrimidinic) lyase activity and introduces nicks in the DNA strand. Cleaves the DNA backbone by beta-delta elimination to generate a single-strand break at the site of the removed base with both 3'- and 5'-phosphates. This chain is Formamidopyrimidine-DNA glycosylase, found in Burkholderia mallei (strain NCTC 10229).